The sequence spans 477 residues: Ankyrin repeat, SAM and basic leucine zipper domain-containing protein 1 (477 aa).

A disordered region spans residues 1 to 24 (MATSALRGLAVAGGGESSESEDDG). Phosphoserine occurs at positions 17, 18, and 20. 6 ANK repeats span residues 46-76 (EKKE…SVDA), 80-109 (YGWT…NASF), 112-146 (DKQT…DPNV), 150-179 (RLMT…EVNT), 183-212 (NGYT…NKML), and 216-245 (DGKL…PLEG). The region spanning 274–336 (SYAEFGDLEV…KILAALKELE (63 aa)) is the SAM domain.

As to quaternary structure, interacts with DDX4, PIWIL1, RANBP9 and TDRD1.

It is found in the cytoplasm. Functionally, plays a central role during spermatogenesis by repressing transposable elements and preventing their mobilization, which is essential for the germline integrity. Acts via the piRNA metabolic process, which mediates the repression of transposable elements during meiosis by forming complexes composed of piRNAs and Piwi proteins and governs the methylation and subsequent repression of transposons. Its association with pi-bodies suggests a participation in the primary piRNAs metabolic process. Required prior to the pachytene stage to facilitate the production of multiple types of piRNAs, including those associated with repeats involved in the regulation of retrotransposons. May act by mediating protein-protein interactions during germ cell maturation. The sequence is that of Ankyrin repeat, SAM and basic leucine zipper domain-containing protein 1 (ASZ1) from Saimiri boliviensis boliviensis (Bolivian squirrel monkey).